We begin with the raw amino-acid sequence, 440 residues long: ATP-dependent protease ATPase subunit HslU (440 aa).

Residues V18, 60–65 (GVGKTE), D253, E318, and R390 each bind ATP.

Belongs to the ClpX chaperone family. HslU subfamily. In terms of assembly, a double ring-shaped homohexamer of HslV is capped on each side by a ring-shaped HslU homohexamer. The assembly of the HslU/HslV complex is dependent on binding of ATP.

The protein resides in the cytoplasm. ATPase subunit of a proteasome-like degradation complex; this subunit has chaperone activity. The binding of ATP and its subsequent hydrolysis by HslU are essential for unfolding of protein substrates subsequently hydrolyzed by HslV. HslU recognizes the N-terminal part of its protein substrates and unfolds these before they are guided to HslV for hydrolysis. The protein is ATP-dependent protease ATPase subunit HslU of Methylococcus capsulatus (strain ATCC 33009 / NCIMB 11132 / Bath).